The sequence spans 73 residues: Large ribosomal subunit protein bL31 (73 aa).

It belongs to the bacterial ribosomal protein bL31 family. Type A subfamily. In terms of assembly, part of the 50S ribosomal subunit.

Its function is as follows. Binds the 23S rRNA. The polypeptide is Large ribosomal subunit protein bL31 (Rhizobium rhizogenes (strain K84 / ATCC BAA-868) (Agrobacterium radiobacter)).